The sequence spans 264 residues: 3-methyl-2-oxobutanoate hydroxymethyltransferase (264 aa).

The Mg(2+) site is built by D45 and D84. 3-methyl-2-oxobutanoate is bound by residues 45-46 (DS), D84, and K112. Mg(2+) is bound at residue E114. E181 functions as the Proton acceptor in the catalytic mechanism.

The protein belongs to the PanB family. In terms of assembly, homodecamer; pentamer of dimers. Mg(2+) is required as a cofactor.

The protein resides in the cytoplasm. It carries out the reaction 3-methyl-2-oxobutanoate + (6R)-5,10-methylene-5,6,7,8-tetrahydrofolate + H2O = 2-dehydropantoate + (6S)-5,6,7,8-tetrahydrofolate. Its pathway is cofactor biosynthesis; (R)-pantothenate biosynthesis; (R)-pantoate from 3-methyl-2-oxobutanoate: step 1/2. Its function is as follows. Catalyzes the reversible reaction in which hydroxymethyl group from 5,10-methylenetetrahydrofolate is transferred onto alpha-ketoisovalerate to form ketopantoate. This Escherichia coli O157:H7 protein is 3-methyl-2-oxobutanoate hydroxymethyltransferase.